A 206-amino-acid chain; its full sequence is MELHTVLIMLSLLPLLEAQNPEHAINIGDPITNETLSWLSGKWFLIAVADSDPDYRQEIQKVQTIFFYLTLNKINDTMELREYHTKDDHCVYNSNLLGFQRENGTLFKYEGEVENPSHLRVLEKHGAIMLFFDLKDEKKRGLSLSARRPDIPPELREVFQKAVTHVGMDESEIIFVDWKKDRCSEQEKKHLELEKETKKDPEESQA.

The N-terminal stretch at 1-18 (MELHTVLIMLSLLPLLEA) is a signal peptide. 3 N-linked (GlcNAc...) asparagine glycosylation sites follow: N33, N75, and N103. Cysteines 90 and 183 form a disulfide. Positions 187-206 (EKKHLELEKETKKDPEESQA) are disordered.

It belongs to the calycin superfamily. Lipocalin family.

The protein localises to the secreted. Functions as a transport protein in the blood stream. Binds various ligands in the interior of its beta-barrel domain. Appears to function in modulating the activity of the immune system during the acute-phase reaction. The protein is Alpha-1-acid glycoprotein 3 (Orm3) of Mus musculus (Mouse).